A 149-amino-acid polypeptide reads, in one-letter code: uncharacterized protein (149 aa).

Positions 130-144 (ESNVTKENIEIKEEK) are enriched in basic and acidic residues. Residues 130–149 (ESNVTKENIEIKEEKEENSE) are disordered.

This is an uncharacterized protein from Methanocaldococcus jannaschii (strain ATCC 43067 / DSM 2661 / JAL-1 / JCM 10045 / NBRC 100440) (Methanococcus jannaschii).